A 104-amino-acid polypeptide reads, in one-letter code: Chromogranin-A (104 aa).

Cysteines 17 and 38 form a disulfide.

Belongs to the chromogranin/secretogranin protein family. As to quaternary structure, dimer.

The protein resides in the cytoplasmic vesicle. It localises to the secretory vesicle. It is found in the secreted. Chromogranin A probably has a paracrine role in the regulation of secretion or maturation. The protein is Chromogranin-A (CHGA) of Struthio camelus (Common ostrich).